The primary structure comprises 458 residues: UDP-N-acetylmuramate--L-alanine ligase (458 aa).

An ATP-binding site is contributed by 118-124 (GTHGKTT).

Belongs to the MurCDEF family.

It is found in the cytoplasm. The catalysed reaction is UDP-N-acetyl-alpha-D-muramate + L-alanine + ATP = UDP-N-acetyl-alpha-D-muramoyl-L-alanine + ADP + phosphate + H(+). It functions in the pathway cell wall biogenesis; peptidoglycan biosynthesis. Its function is as follows. Cell wall formation. This Clostridium novyi (strain NT) protein is UDP-N-acetylmuramate--L-alanine ligase.